Consider the following 243-residue polypeptide: 2-C-methyl-D-erythritol 4-phosphate cytidylyltransferase (243 aa).

Belongs to the IspD/TarI cytidylyltransferase family. IspD subfamily.

The enzyme catalyses 2-C-methyl-D-erythritol 4-phosphate + CTP + H(+) = 4-CDP-2-C-methyl-D-erythritol + diphosphate. It functions in the pathway isoprenoid biosynthesis; isopentenyl diphosphate biosynthesis via DXP pathway; isopentenyl diphosphate from 1-deoxy-D-xylulose 5-phosphate: step 2/6. Functionally, catalyzes the formation of 4-diphosphocytidyl-2-C-methyl-D-erythritol from CTP and 2-C-methyl-D-erythritol 4-phosphate (MEP). This chain is 2-C-methyl-D-erythritol 4-phosphate cytidylyltransferase, found in Rhodopirellula baltica (strain DSM 10527 / NCIMB 13988 / SH1).